The following is a 152-amino-acid chain: Cyanate hydratase (152 aa).

Active-site residues include Arg-98, Glu-101, and Ser-124.

The protein belongs to the cyanase family.

It carries out the reaction cyanate + hydrogencarbonate + 3 H(+) = NH4(+) + 2 CO2. Functionally, catalyzes the reaction of cyanate with bicarbonate to produce ammonia and carbon dioxide. In Uncinocarpus reesii (strain UAMH 1704), this protein is Cyanate hydratase.